The chain runs to 458 residues: UDP-N-acetylmuramoylalanine--D-glutamate ligase (458 aa).

124 to 130 (GSDGKTT) is an ATP binding site.

It belongs to the MurCDEF family.

It localises to the cytoplasm. It catalyses the reaction UDP-N-acetyl-alpha-D-muramoyl-L-alanine + D-glutamate + ATP = UDP-N-acetyl-alpha-D-muramoyl-L-alanyl-D-glutamate + ADP + phosphate + H(+). It functions in the pathway cell wall biogenesis; peptidoglycan biosynthesis. In terms of biological role, cell wall formation. Catalyzes the addition of glutamate to the nucleotide precursor UDP-N-acetylmuramoyl-L-alanine (UMA). This Clostridium botulinum (strain Okra / Type B1) protein is UDP-N-acetylmuramoylalanine--D-glutamate ligase.